A 224-amino-acid polypeptide reads, in one-letter code: Large ribosomal subunit protein uL3 (224 aa).

At glutamine 159 the chain carries N5-methylglutamine.

It belongs to the universal ribosomal protein uL3 family. As to quaternary structure, part of the 50S ribosomal subunit. Forms a cluster with proteins L14 and L19. In terms of processing, methylated by PrmB.

Functionally, one of the primary rRNA binding proteins, it binds directly near the 3'-end of the 23S rRNA, where it nucleates assembly of the 50S subunit. The protein is Large ribosomal subunit protein uL3 of Janthinobacterium sp. (strain Marseille) (Minibacterium massiliensis).